The chain runs to 51 residues: Protein SspM (51 aa).

This sequence belongs to the alpha/beta-type SASP family.

The sequence is that of Protein SspM (sspM) from Mycolicibacterium phlei (Mycobacterium phlei).